A 105-amino-acid polypeptide reads, in one-letter code: Small ribosomal subunit protein eS24 (105 aa).

A disordered region spans residues 86-105; sequence LERNKIEADEEADEEAAEEA. Residues 93–105 show a composition bias toward acidic residues; it reads ADEEADEEAAEEA.

This sequence belongs to the eukaryotic ribosomal protein eS24 family.

This Natronomonas pharaonis (strain ATCC 35678 / DSM 2160 / CIP 103997 / JCM 8858 / NBRC 14720 / NCIMB 2260 / Gabara) (Halobacterium pharaonis) protein is Small ribosomal subunit protein eS24.